We begin with the raw amino-acid sequence, 421 residues long: Tryptophan synthase beta chain (421 aa).

At Lys-110 the chain carries N6-(pyridoxal phosphate)lysine.

Belongs to the TrpB family. As to quaternary structure, tetramer of two alpha and two beta chains. Pyridoxal 5'-phosphate serves as cofactor.

The enzyme catalyses (1S,2R)-1-C-(indol-3-yl)glycerol 3-phosphate + L-serine = D-glyceraldehyde 3-phosphate + L-tryptophan + H2O. It participates in amino-acid biosynthesis; L-tryptophan biosynthesis; L-tryptophan from chorismate: step 5/5. Functionally, the beta subunit is responsible for the synthesis of L-tryptophan from indole and L-serine. This chain is Tryptophan synthase beta chain (trpB), found in Mycobacterium intracellulare.